The following is an 873-amino-acid chain: Tyrosine-protein kinase transforming protein Fps (873 aa).

The tract at residues 1–46 is disordered; it reads ASGQLHRPQPQEHTSTSAAAGTWRLTQASESRHRLPHCSAAPSHQD. The span at 11-29 shows a compositional bias: polar residues; the sequence is QEHTSTSAAAGTWRLTQAS. Residues 50–313 form the F-BAR domain; the sequence is MGFGPELWCP…AVEMIDPATE (264 aa). Residues 445 to 471 form a disordered region; sequence GSEEPPPALPLQEDRQSARSTDQERSG. Residues 456–469 show a composition bias toward basic and acidic residues; it reads QEDRQSARSTDQER. Residues 511-600 form the SH2 domain; the sequence is WYHGAIPRSE…KSGIVLTRAV (90 aa). The Protein kinase domain occupies 612-865; sequence VLLGERIGRG…PSFGAVHQDL (254 aa). ATP-binding positions include 618-626 and lysine 641; that span reads IGRGNFGEV. Residue aspartate 734 is the Proton acceptor of the active site. Tyrosine 764 is subject to Phosphotyrosine; by autocatalysis.

The protein belongs to the protein kinase superfamily. Tyr protein kinase family. Fes/fps subfamily.

It catalyses the reaction L-tyrosyl-[protein] + ATP = O-phospho-L-tyrosyl-[protein] + ADP + H(+). The chain is Tyrosine-protein kinase transforming protein Fps (V-FPS) from Gallus gallus (Chicken).